Here is a 238-residue protein sequence, read N- to C-terminus: Xyloglucan-specific endo-beta-1,4-glucanase A (238 aa).

The first 14 residues, 1–14, serve as a signal peptide directing secretion; that stretch reads MKLSLLSLATLASA.

Belongs to the glycosyl hydrolase 12 (cellulase H) family.

It is found in the secreted. The enzyme catalyses xyloglucan + H2O = xyloglucan oligosaccharides.. Catalyzes endohydrolysis of 1,4-beta-D-glucosidic linkages in xyloglucan with retention of the beta-configuration of the glycosyl residues. Specific for xyloglucan and does not hydrolyze other cell wall components. The sequence is that of Xyloglucan-specific endo-beta-1,4-glucanase A (xgeA) from Aspergillus aculeatus.